The chain runs to 98 residues: Small ribosomal subunit protein uS17 (98 aa).

The protein belongs to the universal ribosomal protein uS17 family. As to quaternary structure, part of the 30S ribosomal subunit.

Its function is as follows. One of the primary rRNA binding proteins, it binds specifically to the 5'-end of 16S ribosomal RNA. The chain is Small ribosomal subunit protein uS17 from Mesomycoplasma hyopneumoniae (strain 232) (Mycoplasma hyopneumoniae).